Here is a 142-residue protein sequence, read N- to C-terminus: Large ribosomal subunit protein mL42 (142 aa).

The N-terminal 31 residues, 1–31, are a transit peptide targeting the mitochondrion; it reads MAAAVKWAISNRTIWKHLLPIQNGALSSACH.

This sequence belongs to the mitochondrion-specific ribosomal protein mL42 family. In terms of assembly, component of the mitochondrial ribosome large subunit (39S) which comprises a 16S rRNA and about 50 distinct proteins. Component of the mitochondrial ribosome small subunit (28S) which comprises a 12S rRNA and about 30 distinct proteins.

The protein localises to the mitochondrion. The protein is Large ribosomal subunit protein mL42 (Mrpl42) of Mus musculus (Mouse).